We begin with the raw amino-acid sequence, 381 residues long: Probable peptidoglycan glycosyltransferase FtsW (381 aa).

At 1 to 15 the chain is on the cytoplasmic side; it reads MNNKKKIVKIFFYDK. The helical transmembrane segment at 16–36 threads the bilayer; the sequence is ILFFLLISLSIIGIIIVSSAS. Residues 37-53 are Periplasmic-facing; sequence ISFGIRLHNDYFYFAKR. The helical transmembrane segment at 54 to 74 threads the bilayer; sequence NLLYFFLSFFLFFQIIRIPIN. The Cytoplasmic portion of the chain corresponds to 75 to 81; that stretch reads QLEKYNK. The chain crosses the membrane as a helical span at residues 82 to 102; it reads IALLINLFLLIIVFIIGNSIN. Topologically, residues 103–109 are periplasmic; the sequence is GAIRWIK. Residues 110 to 130 form a helical membrane-spanning segment; the sequence is IGFFSIQPSECSKLILFFYIS. Residues 131–143 lie on the Cytoplasmic side of the membrane; the sequence is DYIVKKNKELKNK. Residues 144–164 form a helical membrane-spanning segment; it reads LWGFLKPIIIMLIFVILLLMQ. Residues 165 to 166 lie on the Periplasmic side of the membrane; the sequence is PD. 2 consecutive transmembrane segments (helical) span residues 167–187 and 188–208; these read LGNS…AGIN and LWKC…LIIF. Over 209 to 278 the chain is Periplasmic; sequence KPYRIRRILS…FSILGEELGY (70 aa). Residues 279–299 traverse the membrane as a helical segment; the sequence is IGSIIILIMLFFVIFRIFLIG. Residues 300-317 lie on the Cytoplasmic side of the membrane; sequence KNSFIQKKFFSGYFSFSV. Residues 318–338 form a helical membrane-spanning segment; it reads GIWISLQTIMNVGGVIGILPI. The Periplasmic portion of the chain corresponds to 339–343; it reads KGLTL. A helical membrane pass occupies residues 344 to 364; sequence PFISYGGSSLITIFSAIAIVI. The Cytoplasmic segment spans residues 365–381; that stretch reads RSDFELRINKYQAYLKQ.

The protein belongs to the SEDS family. FtsW subfamily.

The protein resides in the cell inner membrane. It carries out the reaction [GlcNAc-(1-&gt;4)-Mur2Ac(oyl-L-Ala-gamma-D-Glu-L-Lys-D-Ala-D-Ala)](n)-di-trans,octa-cis-undecaprenyl diphosphate + beta-D-GlcNAc-(1-&gt;4)-Mur2Ac(oyl-L-Ala-gamma-D-Glu-L-Lys-D-Ala-D-Ala)-di-trans,octa-cis-undecaprenyl diphosphate = [GlcNAc-(1-&gt;4)-Mur2Ac(oyl-L-Ala-gamma-D-Glu-L-Lys-D-Ala-D-Ala)](n+1)-di-trans,octa-cis-undecaprenyl diphosphate + di-trans,octa-cis-undecaprenyl diphosphate + H(+). The protein operates within cell wall biogenesis; peptidoglycan biosynthesis. Functionally, peptidoglycan polymerase that is essential for cell division. The chain is Probable peptidoglycan glycosyltransferase FtsW from Wigglesworthia glossinidia brevipalpis.